Here is a 214-residue protein sequence, read N- to C-terminus: Nigrelysin (214 aa).

The signal sequence occupies residues 1–21 (MKNRLVIIVFMVVTMLCASLA). Residues 22-35 (LPLEEKEDEKDEKR) constitute a propeptide that is removed on maturation. The segment at 38–47 (EVAGAVMEGA) is plays an important role in the hemolytic activity. An N-terminal region region spans residues 46–65 (GANLGMSVLQTILQAIGDVS). Phosphocholine contacts are provided by S89, V122, S140, P142, Y168, Y172, and Y173. Residues 140-155 (SVPYDYNWYSNWWNVK) form a trp-rich region, which is important for the binding to lipid membrane region. The short motif at 179–181 (KGD) is the Cell attachment site, crucial for protein stability element.

The protein belongs to the actinoporin family. Sea anemone subfamily. In terms of assembly, octamer or nonamer in membranes. Monomer in the soluble state.

It is found in the secreted. The protein localises to the nematocyst. It localises to the target cell membrane. Pore-forming protein that forms cation-selective hydrophilic pores in cell membranes and causes cytolysis. Pore formation is a multi-step process that involves specific recognition of membrane sphingomyelin (but neither cholesterol nor phosphatidylcholine) using aromatic rich region and adjacent phosphocholine (POC) binding site, firm binding to the membrane (mainly driven by hydrophobic interactions) accompanied by the transfer of the N-terminal region to the lipid-water interface and finally pore formation after oligomerization of monomers. This protein shows potent hemolytic activity (EC(50)=0.09 nM), as well as potent cytotoxic activity on nucleated cells (L1210 cells). The cytotoxic process starts with cellular swelling that is time and dose dependent and occurs up to a critical volume, probably due to influx of water via pores opened by this actinoporin. The second phase consists of the final loss of membrane integrity that leads to cytolysis. This Anthopleura nigrescens (Sea anemone) protein is Nigrelysin.